Here is a 267-residue protein sequence, read N- to C-terminus: Ribosomal RNA small subunit methyltransferase A (267 aa).

S-adenosyl-L-methionine contacts are provided by asparagine 16, leucine 18, glycine 43, glutamate 64, aspartate 88, and asparagine 109.

The protein belongs to the class I-like SAM-binding methyltransferase superfamily. rRNA adenine N(6)-methyltransferase family. RsmA subfamily.

It localises to the cytoplasm. It catalyses the reaction adenosine(1518)/adenosine(1519) in 16S rRNA + 4 S-adenosyl-L-methionine = N(6)-dimethyladenosine(1518)/N(6)-dimethyladenosine(1519) in 16S rRNA + 4 S-adenosyl-L-homocysteine + 4 H(+). Functionally, specifically dimethylates two adjacent adenosines (A1518 and A1519) in the loop of a conserved hairpin near the 3'-end of 16S rRNA in the 30S particle. May play a critical role in biogenesis of 30S subunits. The chain is Ribosomal RNA small subunit methyltransferase A from Acidithiobacillus ferrooxidans (strain ATCC 23270 / DSM 14882 / CIP 104768 / NCIMB 8455) (Ferrobacillus ferrooxidans (strain ATCC 23270)).